A 106-amino-acid chain; its full sequence is MMDSSPEKTNLELLYERVCEQGREFEVVFYPMLPRLYEMMLPSLEARLNFLSVGYRHVAFARYVHGDVDCVHREVMAQKMVLLTSILSKLLNVNGILEHQEYLNTE.

This sequence belongs to the herpesviridae TRM2 protein family. As to quaternary structure, associates with TRM1 and TRM3 to form the tripartite terminase complex.

Its subcellular location is the host nucleus. Functionally, component of the molecular motor that translocates viral genomic DNA in empty capsid during DNA packaging. Forms a tripartite terminase complex together with TRM1 and TRM3 in the host cytoplasm. Once the complex reaches the host nucleus, it interacts with the capsid portal vertex. This portal forms a ring in which genomic DNA is translocated into the capsid. The protein is Tripartite terminase subunit 2 of Human herpesvirus 6A (strain Uganda-1102) (HHV-6 variant A).